A 483-amino-acid polypeptide reads, in one-letter code: Membrane-bound lytic murein transglycosylase F (483 aa).

Residues 1–18 form the signal peptide; it reads MKGLIARFIAGFALLLWA. A non-LT domain region spans residues 19-267; sequence WDMVFPWQQL…RIEEKYFNHL (249 aa). Positions 269 to 483 are LT domain; that stretch reads HFDYVDIQSY…SKESDSTLKE (215 aa). Glu312 is a catalytic residue. Residues 458 to 483 form a disordered region; that stretch reads QQIQNNEEQPSVPQEISKESDSTLKE. Basic and acidic residues predominate over residues 473-483; sequence ISKESDSTLKE.

This sequence in the N-terminal section; belongs to the bacterial solute-binding protein 3 family. It in the C-terminal section; belongs to the transglycosylase Slt family.

Its subcellular location is the cell outer membrane. The enzyme catalyses Exolytic cleavage of the (1-&gt;4)-beta-glycosidic linkage between N-acetylmuramic acid (MurNAc) and N-acetylglucosamine (GlcNAc) residues in peptidoglycan, from either the reducing or the non-reducing ends of the peptidoglycan chains, with concomitant formation of a 1,6-anhydrobond in the MurNAc residue.. In terms of biological role, murein-degrading enzyme that degrades murein glycan strands and insoluble, high-molecular weight murein sacculi, with the concomitant formation of a 1,6-anhydromuramoyl product. Lytic transglycosylases (LTs) play an integral role in the metabolism of the peptidoglycan (PG) sacculus. Their lytic action creates space within the PG sacculus to allow for its expansion as well as for the insertion of various structures such as secretion systems and flagella. The polypeptide is Membrane-bound lytic murein transglycosylase F (Actinobacillus pleuropneumoniae serotype 3 (strain JL03)).